A 332-amino-acid polypeptide reads, in one-letter code: MSTKEKLISHVMKEEPVGSRSKVTVVGVGMVGMASAISVLLKDLCDELALVDVMEEKLKGEVMDLQHGSLFLKTHKIVADKDYSVTANSKVVVVTAGARQQEGESRLNLVQRNVNIFKFIIPNIVKYSPNCIIMVVSNPVDILTYVAWKLSGFPRHRVIGSGTNLDSARFRHLMGEKLNIHPSSCHGWIVGEHGDSSVPVWSGVNVAGVSLQGLNPKMGVEGDSENWKAVHKQVVDGAYEVIRLKGYTSWAIGMSVADLVESIIKNLHKVHPVSTLVQGMHGVKDEVFMSIPCVLGNSGLTDVIHMTLKAEEEKQLVTSAETLWGVQKELTL.

Residues 29–57 (GMVGMASAISVLLKDLCDELALVDVMEEK) and Arg-99 contribute to the NAD(+) site. Substrate-binding residues include Arg-106, Asn-138, and Arg-169. NAD(+) is bound at residue Asn-138. Catalysis depends on His-193, which acts as the Proton acceptor. Position 248 (Thr-248) interacts with substrate.

Belongs to the LDH/MDH superfamily. LDH family. As to quaternary structure, homotetramer.

The protein resides in the cytoplasm. The catalysed reaction is (S)-lactate + NAD(+) = pyruvate + NADH + H(+). Its pathway is fermentation; pyruvate fermentation to lactate; (S)-lactate from pyruvate: step 1/1. In terms of biological role, interconverts simultaneously and stereospecifically pyruvate and lactate with concomitant interconversion of NADH and NAD(+). The polypeptide is L-lactate dehydrogenase A chain (ldha) (Lycodichthys dearborni (Antarctic eelpout)).